Here is a 533-residue protein sequence, read N- to C-terminus: Na(+)/H(+) antiporter NhaB (533 aa).

11 helical membrane passes run 10–30 (IGNF…SFLI), 67–87 (PGGL…SQVL), 96–116 (VLLL…LLLF), 131–165 (VSLL…FYSI), 209–229 (LLMH…VGEP), 247–267 (IRMS…CYIV), 310–330 (AFIG…VGLI), 355–375 (EEAL…AVII), 396–416 (LVIF…VFVG), 454–474 (ATPN…APLI), and 485–505 (ALPY…IGFL).

This sequence belongs to the NhaB Na(+)/H(+) (TC 2.A.34) antiporter family.

It localises to the cell inner membrane. The enzyme catalyses 2 Na(+)(in) + 3 H(+)(out) = 2 Na(+)(out) + 3 H(+)(in). In terms of biological role, na(+)/H(+) antiporter that extrudes sodium in exchange for external protons. This chain is Na(+)/H(+) antiporter NhaB, found in Shewanella oneidensis (strain ATCC 700550 / JCM 31522 / CIP 106686 / LMG 19005 / NCIMB 14063 / MR-1).